A 192-amino-acid polypeptide reads, in one-letter code: UPF0312 protein Spro_1887 (192 aa).

The first 23 residues, 1–23 (MLKKTVLGLTAGAMLLSAGSALA), serve as a signal peptide directing secretion.

It belongs to the UPF0312 family. Type 1 subfamily.

It localises to the periplasm. This chain is UPF0312 protein Spro_1887, found in Serratia proteamaculans (strain 568).